Here is a 119-residue protein sequence, read N- to C-terminus: Large ribosomal subunit protein uL22 (119 aa).

Belongs to the universal ribosomal protein uL22 family. In terms of assembly, part of the 50S ribosomal subunit.

Functionally, this protein binds specifically to 23S rRNA; its binding is stimulated by other ribosomal proteins, e.g. L4, L17, and L20. It is important during the early stages of 50S assembly. It makes multiple contacts with different domains of the 23S rRNA in the assembled 50S subunit and ribosome. Its function is as follows. The globular domain of the protein is located near the polypeptide exit tunnel on the outside of the subunit, while an extended beta-hairpin is found that lines the wall of the exit tunnel in the center of the 70S ribosome. This Rickettsia akari (strain Hartford) protein is Large ribosomal subunit protein uL22.